The following is a 287-amino-acid chain: Immunoglobulin alpha Fc receptor (287 aa).

The N-terminal stretch at 1–21 (MDPKQTTLLCLVLCLGQRIQA) is a signal peptide. Residues 22–227 (QEGDFPMPFI…SIHQDYTTQN (206 aa)) lie on the Extracellular side of the membrane. Ig-like C2-type domains lie at 42–107 (DGSV…IGHY) and 139–200 (GENI…YNRS). Residues Cys49 and Cys100 are joined by a disulfide bond. Residues Asn65, Asn79, Asn141, Asn177, and Asn186 are each glycosylated (N-linked (GlcNAc...) asparagine). Residues Cys146 and Cys193 are joined by a disulfide bond. A helical transmembrane segment spans residues 228 to 246 (LIRMAVAGLVLVALLAILV). The Cytoplasmic segment spans residues 247–287 (ENWHSHTALNKEASADVAEPSWSQQMCQPGLTFARTPSVCK).

Associates with the Fc epsilon RI gamma 2 receptor inducing tyrosine phosphorylation of gamma 2. As to quaternary structure, (Microbial infection) Interacts with Staphylococcus aureus protein SSL11. As to expression, isoform A.1, isoform A.2 and isoform A.3 are differentially expressed between blood and mucosal myeloid cells. Isoform A.1, isoform A.2 and isoform A.3 are expressed in monocytes. Isoform A.1 and isoform A.2 are expressed in alveolar macrophages; however only one isoform is expressed at alveolar macrophages surfaces.

It is found in the cell membrane. It localises to the secreted. Its function is as follows. Binds to the Fc region of immunoglobulins alpha. Mediates several functions including cytokine production. The chain is Immunoglobulin alpha Fc receptor (FCAR) from Homo sapiens (Human).